Here is a 343-residue protein sequence, read N- to C-terminus: tRNA N6-adenosine threonylcarbamoyltransferase (343 aa).

Residues His-115 and His-119 each contribute to the Fe cation site. Residues 137–141 (IVSGG), Asp-170, Gly-183, Asp-187, and Asn-276 each bind substrate. Asp-304 contacts Fe cation.

Belongs to the KAE1 / TsaD family. Requires Fe(2+) as cofactor.

The protein resides in the cytoplasm. It catalyses the reaction L-threonylcarbamoyladenylate + adenosine(37) in tRNA = N(6)-L-threonylcarbamoyladenosine(37) in tRNA + AMP + H(+). Required for the formation of a threonylcarbamoyl group on adenosine at position 37 (t(6)A37) in tRNAs that read codons beginning with adenine. Is involved in the transfer of the threonylcarbamoyl moiety of threonylcarbamoyl-AMP (TC-AMP) to the N6 group of A37, together with TsaE and TsaB. TsaD likely plays a direct catalytic role in this reaction. The polypeptide is tRNA N6-adenosine threonylcarbamoyltransferase (Staphylococcus carnosus (strain TM300)).